The following is a 397-amino-acid chain: Cathepsin E-B (397 aa).

A signal peptide spans methionine 1–glycine 16. Positions leucine 17–methionine 49 are cleaved as a propeptide — activation peptide. The 312-residue stretch at tyrosine 74–alanine 385 folds into the Peptidase A1 domain. A glycan (N-linked (GlcNAc...) asparagine) is linked at asparagine 86. Aspartate 92 is an active-site residue. A disulfide bridge links cysteine 105 with cysteine 110. Asparagine 130 carries an N-linked (GlcNAc...) asparagine glycan. Cysteines 268 and 272 form a disulfide. Residue aspartate 277 is part of the active site. A disulfide bridge connects residues cysteine 310 and cysteine 344.

It belongs to the peptidase A1 family. As to quaternary structure, homodimer; disulfide-linked. Post-translationally, glycosylated. Contains high mannose-type oligosaccharide. As to expression, expressed predominantly in the anterior and posterior adult stomach and at much lower levels in the larval foregut.

The protein resides in the endosome. It catalyses the reaction Similar to cathepsin D, but slightly broader specificity.. Its function is as follows. May have a role in immune function. Probably involved in the processing of antigenic peptides during MHC class II-mediated antigen presentation. This Xenopus laevis (African clawed frog) protein is Cathepsin E-B (ctse-b).